The following is a 432-amino-acid chain: Serine--tRNA ligase (432 aa).

236–238 is an L-serine binding site; it reads TSE. Residue 267–269 participates in ATP binding; the sequence is RSE. Position 290 (Glu290) interacts with L-serine. An ATP-binding site is contributed by 354–357; the sequence is EISS. Position 390 (Ser390) interacts with L-serine.

The protein belongs to the class-II aminoacyl-tRNA synthetase family. Type-1 seryl-tRNA synthetase subfamily. As to quaternary structure, homodimer. The tRNA molecule binds across the dimer.

It is found in the cytoplasm. It catalyses the reaction tRNA(Ser) + L-serine + ATP = L-seryl-tRNA(Ser) + AMP + diphosphate + H(+). The catalysed reaction is tRNA(Sec) + L-serine + ATP = L-seryl-tRNA(Sec) + AMP + diphosphate + H(+). It functions in the pathway aminoacyl-tRNA biosynthesis; selenocysteinyl-tRNA(Sec) biosynthesis; L-seryl-tRNA(Sec) from L-serine and tRNA(Sec): step 1/1. In terms of biological role, catalyzes the attachment of serine to tRNA(Ser). Is also able to aminoacylate tRNA(Sec) with serine, to form the misacylated tRNA L-seryl-tRNA(Sec), which will be further converted into selenocysteinyl-tRNA(Sec). The polypeptide is Serine--tRNA ligase (Pseudoalteromonas atlantica (strain T6c / ATCC BAA-1087)).